A 463-amino-acid polypeptide reads, in one-letter code: Argininosuccinate lyase (463 aa).

Belongs to the lyase 1 family. Argininosuccinate lyase subfamily.

Its subcellular location is the cytoplasm. It catalyses the reaction 2-(N(omega)-L-arginino)succinate = fumarate + L-arginine. It functions in the pathway amino-acid biosynthesis; L-arginine biosynthesis; L-arginine from L-ornithine and carbamoyl phosphate: step 3/3. The chain is Argininosuccinate lyase from Methylorubrum extorquens (strain CM4 / NCIMB 13688) (Methylobacterium extorquens).